The sequence spans 248 residues: 3-deoxy-manno-octulosonate cytidylyltransferase (248 aa).

It belongs to the KdsB family.

The protein resides in the cytoplasm. The catalysed reaction is 3-deoxy-alpha-D-manno-oct-2-ulosonate + CTP = CMP-3-deoxy-beta-D-manno-octulosonate + diphosphate. Its pathway is nucleotide-sugar biosynthesis; CMP-3-deoxy-D-manno-octulosonate biosynthesis; CMP-3-deoxy-D-manno-octulosonate from 3-deoxy-D-manno-octulosonate and CTP: step 1/1. It participates in bacterial outer membrane biogenesis; lipopolysaccharide biosynthesis. Functionally, activates KDO (a required 8-carbon sugar) for incorporation into bacterial lipopolysaccharide in Gram-negative bacteria. This Erwinia tasmaniensis (strain DSM 17950 / CFBP 7177 / CIP 109463 / NCPPB 4357 / Et1/99) protein is 3-deoxy-manno-octulosonate cytidylyltransferase.